A 457-amino-acid chain; its full sequence is Exodeoxyribonuclease 7 large subunit (457 aa).

Belongs to the XseA family. Heterooligomer composed of large and small subunits.

It localises to the cytoplasm. The catalysed reaction is Exonucleolytic cleavage in either 5'- to 3'- or 3'- to 5'-direction to yield nucleoside 5'-phosphates.. Its function is as follows. Bidirectionally degrades single-stranded DNA into large acid-insoluble oligonucleotides, which are then degraded further into small acid-soluble oligonucleotides. The chain is Exodeoxyribonuclease 7 large subunit from Escherichia coli O127:H6 (strain E2348/69 / EPEC).